The following is a 342-amino-acid chain: MYNNSMKLLFLSSLMMGTYLSISSTPWLGTWMGLEINLLSIIPMLTDNKNSMINEPAIKYFIIQSMASTMLLISILIIQMKYMMWWDNKNIPSMMIMSSMMMKMGAAPFHFWLPEVMSSTSWINCLMLMTWQKIAPMMTMSYCIKMSSFLFVVIMMGIIVGAMGGLNQTSLRQILAYSSISHLGWMISSMTISENTWEFYFLIYSTLNVIIIFMFKTMNLFFLNQIYSASYFKTEIKFMMMTSLLSLGGLPPMLGFLPKWIVMQSLIDNKMTALVLLMITFTTITLYYYMRISFSAIIMLHNENSWLTSIKMNKLVVALPILSMISTMGLICTSNFMLLLSS.

A run of 9 helical transmembrane segments spans residues Thr-25–Leu-45, Ile-58–Ile-78, Met-94–Pro-114, Met-146–Leu-166, Ile-174–Glu-194, Asn-195–Phe-215, Phe-238–Pro-258, Leu-274–Phe-294, and Val-316–Phe-336.

It belongs to the complex I subunit 2 family.

Its subcellular location is the mitochondrion inner membrane. It carries out the reaction a ubiquinone + NADH + 5 H(+)(in) = a ubiquinol + NAD(+) + 4 H(+)(out). Functionally, core subunit of the mitochondrial membrane respiratory chain NADH dehydrogenase (Complex I) that is believed to belong to the minimal assembly required for catalysis. Complex I functions in the transfer of electrons from NADH to the respiratory chain. The immediate electron acceptor for the enzyme is believed to be ubiquinone. The protein is NADH-ubiquinone oxidoreductase chain 2 (ND2) of Locusta migratoria (Migratory locust).